The chain runs to 440 residues: MSLLPTATISTIAHHNGEVVTLAGWVVHKTEKGKLVFIRLRDGSGVIQCVVFRNNVTEATFAAAQQLTIESSCRITGAVRADARAPGGFELDVNAIEIIQIAPEYPIQPKEHGVEFLMEHRHLWIRSSKQHALLRIRAEIIAAAQEWLNDQGFVRFDTPILTPCAAEGTTNLFATPYFDLGTAYLGQTGQLYVEAGMMSFGKVYCFGPTFRAEKSKTRRHLTEFWMIEPEVAFALHEDNLALQERFVSAIVQRVLERRADDLATLERDTKPLERCVPPFPRITYDEALKLIAERHADVEGCTPLEWGEDLGAPHETLIASLFDRPVFVERFPSAIKAFYMEPDPQRPEVALCADLLAPEGYGEIIGGSQRIHDPALLERRIREYGLNVDDYQWYIDLRRYGSVPHSGFGMGIERATAWIAGTHHIRETIPFPRMLYRMYP.

It belongs to the class-II aminoacyl-tRNA synthetase family. Homodimer.

It localises to the cytoplasm. It carries out the reaction tRNA(Asn) + L-asparagine + ATP = L-asparaginyl-tRNA(Asn) + AMP + diphosphate + H(+). The polypeptide is Asparagine--tRNA ligase (Roseiflexus sp. (strain RS-1)).